The primary structure comprises 1009 residues: Type VII secretion system accessory factor EsaA (1009 aa).

The helical transmembrane segment at 7 to 27 (IYALIVTLIIIIAIVSMIFFV) threads the bilayer. Residues 680–697 (TFAEEPQEPKIDKGKNDE) are compositionally biased toward basic and acidic residues. Residues 680-707 (TFAEEPQEPKIDKGKNDEFNTMSSNLDK) form a disordered region. Helical transmembrane passes span 822 to 842 (ISPTLFVLLMYLLSMITAYIF), 869 to 889 (VITSGVIGTTGLVEGLIVGLI), 903 to 923 (KFILMVILTMMVFVLINTYLL), 928 to 948 (SIGMFLMIAALGLYFVAMNNL), and 979 to 999 (IGLVLVILTVLVIIGFVLNMF).

It belongs to the EsaA family. As to quaternary structure, homodimer. Interacts with EssB.

It localises to the cell membrane. In terms of biological role, component of the type VII secretion system (Ess). Provides together with EssB and other components such as EssC and EssE a secretion platform across the cytoplasmic membrane in the host. In Staphylococcus aureus (strain COL), this protein is Type VII secretion system accessory factor EsaA.